The chain runs to 166 residues: MTDKFPEDVKFLYIAYTPAKADITACGIPIPLDFDKEFRDKTVVIVAIPGAFTPTCTANHIPPFVEKFTALKSAGVDAVIVLSANDPFVQSAFGKALGVTDEAFIFASDPGAEFSKSAGLSLDLPPAFGTRTARYAIIVSNGVVKYVEKDSEGVAGSGVDAVLAAL.

In terms of domain architecture, Thioredoxin spans phenylalanine 5–leucine 166. The active-site Cysteine sulfenic acid (-SOH) intermediate is cysteine 56.

Belongs to the peroxiredoxin family. Prx5 subfamily. As to quaternary structure, homodimer; disulfide-linked, upon oxidation.

The enzyme catalyses a hydroperoxide + [protein]-dithiol = [protein]-disulfide + an alcohol + H2O. Thiol-specific peroxidase that catalyzes the reduction of hydrogen peroxide and organic hydroperoxides to water and alcohols, respectively. Plays a role in cell protection against oxidative stress by detoxifying peroxides and as sensor of hydrogen peroxide-mediated signaling events. The sequence is that of Putative peroxisomal peroxiredoxin from Lipomyces kononenkoae (Yeast).